The primary structure comprises 416 residues: Solute carrier family 25 member 46 (416 aa).

A compositionally biased stretch (basic and acidic residues) spans 1–13 (MQPRRPDRFDGLE). The disordered stretch occupies residues 1 to 91 (MQPRRPDRFD…GEESSSSSSG (91 aa)). Residues 37–49 (SFSSSGDLSQHWV) are compositionally biased toward polar residues. The span at 82–91 (GEESSSSSSG) shows a compositional bias: low complexity. The Solcar 1 repeat unit spans residues 94-185 (HLNRFAGFGI…GMLSEFTHLP (92 aa)). Helical transmembrane passes span 101 to 121 (FGIG…CIVL), 161 to 181 (MGST…LSEF), 197 to 217 (IGGH…FYSA), 256 to 276 (LLPL…HYII), 312 to 332 (FPEL…LYPL), and 381 to 401 (LGFY…AIVL). One copy of the Solcar 2 repeat lies at 309 to 414 (EDYFPELIAN…KIIYSSVVQT (106 aa)).

This sequence belongs to the mitochondrial carrier (TC 2.A.29) family.

It is found in the mitochondrion outer membrane. Functionally, may play a role in mitochondrial dynamics by controlling mitochondrial membrane fission. The chain is Solute carrier family 25 member 46 (slc25a46) from Xenopus tropicalis (Western clawed frog).